The following is a 201-amino-acid chain: Small ribosomal subunit protein uS4c (201 aa).

Residues 15-44 form a disordered region; the sequence is LGALPGLTSKRPKTGNDLKNQSRSGKKSQY. The S4 RNA-binding domain maps to 89 to 150; sequence MRLDNILFRL…EKKSRTLIQN (62 aa).

The protein belongs to the universal ribosomal protein uS4 family. Part of the 30S ribosomal subunit. Contacts protein S5. The interaction surface between S4 and S5 is involved in control of translational fidelity.

The protein resides in the plastid. Its subcellular location is the chloroplast. Functionally, one of the primary rRNA binding proteins, it binds directly to 16S rRNA where it nucleates assembly of the body of the 30S subunit. In terms of biological role, with S5 and S12 plays an important role in translational accuracy. The chain is Small ribosomal subunit protein uS4c (rps4) from Cucumis sativus (Cucumber).